Consider the following 209-residue polypeptide: Large ribosomal subunit protein uL3 (209 aa).

A disordered region spans residues 127–151 (SGGPSSHGSKFHRHLGGTGQATTPA).

It belongs to the universal ribosomal protein uL3 family. As to quaternary structure, part of the 50S ribosomal subunit. Forms a cluster with proteins L14 and L19.

In terms of biological role, one of the primary rRNA binding proteins, it binds directly near the 3'-end of the 23S rRNA, where it nucleates assembly of the 50S subunit. The polypeptide is Large ribosomal subunit protein uL3 (Borrelia turicatae (strain 91E135)).